The primary structure comprises 198 residues: PEP-dependent dihydroxyacetone kinase 1, ADP-binding subunit DhaL (198 aa).

In terms of domain architecture, DhaL spans 6–194 (DWALRWLNDF…SALLFHAMLQ (189 aa)). Mg(2+) contacts are provided by D30, D35, and D37. ADP-binding positions include 38 to 41 (HGIN), 79 to 80 (AS), G120, M129, R166, and 179 to 181 (DPG).

As to quaternary structure, homodimer. The dihydroxyacetone kinase complex is composed of a homodimer of DhaM, a homodimer of DhaK and the subunit DhaL. The cofactor is Mg(2+).

Its subcellular location is the cytoplasm. It carries out the reaction dihydroxyacetone + phosphoenolpyruvate = dihydroxyacetone phosphate + pyruvate. It participates in polyol metabolism; glycerol degradation. ADP-binding subunit of the dihydroxyacetone kinase, which is responsible for the phosphoenolpyruvate (PEP)-dependent phosphorylation of dihydroxyacetone. DhaL-ADP is converted to DhaL-ATP via a phosphoryl group transfer from DhaM and transmits it to dihydroxyacetone binds to DhaK. This Listeria innocua serovar 6a (strain ATCC BAA-680 / CLIP 11262) protein is PEP-dependent dihydroxyacetone kinase 1, ADP-binding subunit DhaL.